The following is a 483-amino-acid chain: MQIDSDLQNNLDTLKKTLGQNDDMMFYTFAFGDSRQKACLLYIDGLTENKMLAQYVISPLQKEALAHKECSIEDLSAFFFGFHHSVVSTMKEIEQLVFSGQAILLADGYRGGLAFDTKSVATRSLDEPSSEVVERGPKIGFIEKLRTNTALLRERTSDPNLVIKEMTLGKRTKKKIAVAYIQDIAPDYVVKEVFKRLKSVNIDNLPESGTLEQLIEDEPFSIFPTILSTERPDRVESSLLEGRVSILVDGTPFALIVPATVDEFIHSPDDYSQRWIPMSLVRLLRYSSILITIYLPGLYISLVSFHTGLLPTRMAISIAGSRLNVPFPPFVEAFIMIFTIELIREAGLRLPKPIGQTIGLIGGVVIGQAAVQAQIVSALMVIVVSVTALASFTVPSYAYNFPLRIIRIGVMISATALGMYGVIMVYLFVIGHLMRLKSFGQDYIIPIMAQPGQDLKDTVIRIPTMFLKRRPTRNDPEDNIRQR.

5 helical membrane passes run 289–309, 323–343, 353–373, 375–395, and 410–430; these read ILIT…HTGL, LNVP…IELI, PIGQ…AVQA, IVSA…FTVP, and VMIS…LFVI.

The protein belongs to the GerABKA family.

It localises to the cell membrane. Its function is as follows. Involved in the response to the germinative mixture of L-asparagine, glucose, fructose and potassium ions (AGFK). Cannot stimulate germination in the absence of gerD and gerK gene products (fructose and glucose receptors respectively). This chain is Spore germination protein B1 (gerBA), found in Bacillus subtilis (strain 168).